The primary structure comprises 260 residues: uncharacterized protein (260 aa).

The first 22 residues, 1-22 (MGNIKSFALYISILLLIVVVAG), serve as a signal peptide directing secretion. Cysteine 23 carries the N-palmitoyl cysteine lipid modification. Residue cysteine 23 is the site of S-diacylglycerol cysteine attachment.

The protein belongs to the staphylococcal tandem lipoprotein family.

It localises to the cell membrane. This is an uncharacterized protein from Staphylococcus aureus (strain MRSA252).